Consider the following 333-residue polypeptide: Gramillins biosynthetic cluster protein FGSG_00039 (333 aa).

Its pathway is mycotoxin biosynthesis. Functionally, part of the gene cluster that mediates the biosynthesis of gramillins A and B, bicyclic lipopeptides that induce cell death in maize leaves but not in wheat leaves. The nonribosomal peptide synthetase GRA1 incorporates respectively a glutamic adic (Glu), a leucine (Leu), a serine (Ser), a hydroxyglutamine (HOGln), a 2-amino decanoic acid, and 2 cysteins (CysB and CysA). The biosynthesis of 2-amino decanoic acid incorporated in gramillins could be initiated by a fatty acid synthase composed of the alpha and beta subunits FGSG_00036 and FGSG_11656. The cytochrome P450 monooxygenase FGSG_15680 could hydroxylate the fatty acid chain. Subsequent oxidation to the ketone by the oxidoreductase FGSG_00048 and transamination by aminotransferase FGSG_00049 could form 2-amino-decanoic acid. On the other hand, FGSG_15680 could also be responsible for the HO-modified glutamine at the gamma-position. Whether hydroxylation occurs on the fully assembled product or on the Gln residue prior to assembly into the gramillins requires further proof. The thioredoxin FGSG_00043 could also be required for the disulfide-bond formation between CysA and CysB. The specific involvement of the remaining proteins from the cluster is more difficult to discern, but could have broader regulatory (FGSG_00040 and FGSG_11657) or enzymatic functions (FGSG_00044 and FGSG_00045). The final C-domain of GRA1 does not possess the expected sequence of a termination CT domain, often implicated in macrocyclization and release of a cyclopeptidein fungal NRPs; and the thioesterase FGSG_00047 may act in concert with the terminal C-domain of GRA1 to catalyze the formation of the macrocyclic anhydride and release of the products. The chain is Gramillins biosynthetic cluster protein FGSG_00039 from Gibberella zeae (strain ATCC MYA-4620 / CBS 123657 / FGSC 9075 / NRRL 31084 / PH-1) (Wheat head blight fungus).